The primary structure comprises 477 residues: V-type proton ATPase subunit B (477 aa).

Position 365 (R365) interacts with ATP.

This sequence belongs to the ATPase alpha/beta chains family. V-ATPase is a heteromultimeric enzyme composed of a peripheral catalytic V1 complex (components A to H) attached to an integral membrane V0 proton pore complex (components: a, c, c', c'', d, e, f and VOA1).

The protein localises to the vacuole membrane. Functionally, non-catalytic subunit of the V1 complex of vacuolar(H+)-ATPase (V-ATPase), a multisubunit enzyme composed of a peripheral complex (V1) that hydrolyzes ATP and a membrane integral complex (V0) that translocates protons. V-ATPase is responsible for acidifying and maintaining the pH of intracellular compartments. The polypeptide is V-type proton ATPase subunit B (Encephalitozoon cuniculi (strain GB-M1) (Microsporidian parasite)).